Reading from the N-terminus, the 358-residue chain is Psilocybin cluster transcription regulator (358 aa).

Disordered regions lie at residues 1–40 (MAPA…IAGM) and 62–212 (SGGK…RRRR). Residues 18–29 (PPAPGAPAPANA) show a composition bias toward pro residues. Residues 79–91 (QTLSNLAQAQPYG) show a composition bias toward polar residues. A compositionally biased stretch (low complexity) spans 179–190 (PTTGRRGGRSAT). Residues 195 to 209 (EWSRQRKDNHKEVER) are compositionally biased toward basic and acidic residues. Residues 199–212 (QRKDNHKEVERRRR) are basic motif. Residues 199–249 (QRKDNHKEVERRRRGNINEGINELGRIVPSGSGEKAKGAILSRAVQYIHHL) form the bHLH domain. Residues 213–249 (GNINEGINELGRIVPSGSGEKAKGAILSRAVQYIHHL) form a helix-loop-helix motif region. A coiled-coil region spans residues 264–306 (KLLMDQAMGDLQAQLEEVKRLWEEERMARTRLEAELEVLRNMN). A disordered region spans residues 308 to 358 (VNAGSAPASKDESAAGTKRRSTDGAEAATAATESSTANAEGERDGKRQRTE). The span at 331–346 (GAEAATAATESSTANA) shows a compositional bias: low complexity. Basic and acidic residues predominate over residues 347 to 358 (EGERDGKRQRTE).

It localises to the nucleus. Transcription factor that may regulate the expression of the gene cluster that mediates the biosynthesis of psilocybin, a psychotropic tryptamine-derived natural product. In Psilocybe cubensis (Psychedelic mushroom), this protein is Psilocybin cluster transcription regulator.